The chain runs to 331 residues: Ribosomal large subunit pseudouridine synthase D (331 aa).

The S4 RNA-binding domain occupies 25-97 (RRFDAVLAEL…IPLDILYEDE (73 aa)). Residue aspartate 145 is part of the active site.

This sequence belongs to the pseudouridine synthase RluA family.

It is found in the cytoplasm. The enzyme catalyses uridine(1911/1915/1917) in 23S rRNA = pseudouridine(1911/1915/1917) in 23S rRNA. In terms of biological role, responsible for synthesis of pseudouridine from uracil at positions 1911, 1915 and 1917 in 23S ribosomal RNA. This is Ribosomal large subunit pseudouridine synthase D (rluD) from Xylella fastidiosa (strain Temecula1 / ATCC 700964).